The sequence spans 164 residues: Transcriptional repressor NrdR (164 aa).

Residues 3–34 fold into a zinc finger; the sequence is CPFCSAQDTKVIDSRLVADGVQIRRRRECLSC. The 91-residue stretch at 49-139 folds into the ATP-cone domain; it reads PRLVKTDGTR…VYRSFQDISE (91 aa).

This sequence belongs to the NrdR family. Requires Zn(2+) as cofactor.

In terms of biological role, negatively regulates transcription of bacterial ribonucleotide reductase nrd genes and operons by binding to NrdR-boxes. The protein is Transcriptional repressor NrdR of Alcanivorax borkumensis (strain ATCC 700651 / DSM 11573 / NCIMB 13689 / SK2).